A 125-amino-acid polypeptide reads, in one-letter code: Larval cuticle protein LCP-14 (125 aa).

The first 16 residues, 1–16 (MKSFIVALCVVGCVLA), serve as a signal peptide directing secretion. In terms of domain architecture, Chitin-binding type R&amp;R spans 33 to 102 (EGSYNYAFES…PQADFLPTPP (70 aa)).

Functionally, component of the cuticle of the larva of tobacco hornworm. This chain is Larval cuticle protein LCP-14 (LCP-14), found in Manduca sexta (Tobacco hawkmoth).